The primary structure comprises 427 residues: Glutamate-1-semialdehyde 2,1-aminomutase (427 aa).

Lys265 is modified (N6-(pyridoxal phosphate)lysine).

This sequence belongs to the class-III pyridoxal-phosphate-dependent aminotransferase family. HemL subfamily. In terms of assembly, homodimer. The cofactor is pyridoxal 5'-phosphate.

Its subcellular location is the cytoplasm. The enzyme catalyses (S)-4-amino-5-oxopentanoate = 5-aminolevulinate. The protein operates within porphyrin-containing compound metabolism; protoporphyrin-IX biosynthesis; 5-aminolevulinate from L-glutamyl-tRNA(Glu): step 2/2. The polypeptide is Glutamate-1-semialdehyde 2,1-aminomutase (Neisseria meningitidis serogroup A / serotype 4A (strain DSM 15465 / Z2491)).